Here is a 738-residue protein sequence, read N- to C-terminus: Pentatricopeptide repeat-containing protein At5g65570 (738 aa).

PPR repeat units lie at residues 98–128, 129–163, 164–198, 200–230, 231–265, 266–300, 301–331, 332–366, 367–401, 402–432, 433–467, 468–502, and 503–537; these read AEIS…MSER, HIVT…NVLP, DEYT…GLEV, NVFV…VEEK, DVVL…KVQP, NEYT…GFES, ALAS…IEYP, NQVS…SIKP, NSFT…GFDR, DKYA…LSEV, DVIS…GLQP, NDVT…KIML, and TNDH…DLVL. Residues 537–612 form a type E motif region; that stretch reads LWRTLLSACK…NPAMSWVEIN (76 aa). The interval 613 to 644 is type E(+) motif; that stretch reads KETHTFMAGDLFSHPNSEQILENLEELIKKSK. Residues 645–738 form a type DYW motif region; the sequence is DLGYVEDKSC…DGSCSCGDYW (94 aa).

This sequence belongs to the PPR family. PCMP-H subfamily.

This Arabidopsis thaliana (Mouse-ear cress) protein is Pentatricopeptide repeat-containing protein At5g65570 (PCMP-H47).